A 379-amino-acid polypeptide reads, in one-letter code: Cytochrome b (379 aa).

The next 4 helical transmembrane spans lie at 33-53 (FGSLLGMCLVLQIFTGLFLAM), 77-98 (WLIRYMHANGASLFFICLYIHI), 113-133 (WNIGILLLFLTMATAFVGYVL), and 178-198 (FFAFHFILPFIIAALATVHLL). Heme b contacts are provided by His-83 and His-97. The heme b site is built by His-182 and His-196. His-201 provides a ligand contact to a ubiquinone. The next 4 membrane-spanning stretches (helical) occupy residues 226–246 (TKDFLGALIXIMFFMTLVLYF), 288–308 (LGGVVALILSILVLALLPYIH), 320–340 (ISQFLFWTLVSDLLLLTWIGG), and 347–367 (FIIIGQTASXMYFTIILIXMX).

This sequence belongs to the cytochrome b family. As to quaternary structure, the cytochrome bc1 complex contains 11 subunits: 3 respiratory subunits (MT-CYB, CYC1 and UQCRFS1), 2 core proteins (UQCRC1 and UQCRC2) and 6 low-molecular weight proteins (UQCRH/QCR6, UQCRB/QCR7, UQCRQ/QCR8, UQCR10/QCR9, UQCR11/QCR10 and a cleavage product of UQCRFS1). This cytochrome bc1 complex then forms a dimer. Heme b is required as a cofactor.

Its subcellular location is the mitochondrion inner membrane. Functionally, component of the ubiquinol-cytochrome c reductase complex (complex III or cytochrome b-c1 complex) that is part of the mitochondrial respiratory chain. The b-c1 complex mediates electron transfer from ubiquinol to cytochrome c. Contributes to the generation of a proton gradient across the mitochondrial membrane that is then used for ATP synthesis. In Thomomys umbrinus (Southern pocket gopher), this protein is Cytochrome b (MT-CYB).